The chain runs to 144 residues: Large ribosomal subunit protein uL13 (144 aa).

Belongs to the universal ribosomal protein uL13 family. Part of the 50S ribosomal subunit.

In terms of biological role, this protein is one of the early assembly proteins of the 50S ribosomal subunit, although it is not seen to bind rRNA by itself. It is important during the early stages of 50S assembly. The polypeptide is Large ribosomal subunit protein uL13 (Nitrosomonas europaea (strain ATCC 19718 / CIP 103999 / KCTC 2705 / NBRC 14298)).